Reading from the N-terminus, the 593-residue chain is Brain-enriched guanylate kinase-associated protein (593 aa).

Residue methionine 1 is modified to N-acetylmethionine. Phosphotyrosine is present on tyrosine 137. Residues serine 200, serine 229, serine 246, serine 265, serine 346, and serine 373 each carry the phosphoserine modification. Position 381 is an asymmetric dimethylarginine (arginine 381). A phosphoserine mark is found at serine 455, serine 465, serine 475, serine 477, serine 500, serine 502, serine 506, serine 553, and serine 563. The disordered stretch occupies residues 499–593 (LSLSPGRSAD…KAQLYGTLLN (95 aa)).

Interacts with DLG4 and DLGAP1 and forms a ternary complex.

The protein localises to the cytoplasm. Its subcellular location is the membrane. Functionally, may sustain the structure of the postsynaptic density (PSD). In Homo sapiens (Human), this protein is Brain-enriched guanylate kinase-associated protein (BEGAIN).